The sequence spans 73 residues: Ocellatin-PT7 (73 aa).

The N-terminal stretch at 1–22 is a signal peptide; it reads MAFLKKSLFLVLFLGLVSLSIC. Positions 23-39 are excised as a propeptide; the sequence is DEEKRQDEDDDDDDDEE.

Expressed by the skin glands.

The protein localises to the secreted. Has antibacterial activity against Gram-negative bacteria E.coli ATCC 25922 (MIC=60 uM) and S.choleraesuis ATCC 14028 (MIC=240 uM) and against Gram-positive bacterium S.aureus ATCC 29313 (MIC=240 uM). Shows no hemolytic activity and no cytotoxicity. This is Ocellatin-PT7 from Leptodactylus pustulatus (Ceara white-lipped frog).